The primary structure comprises 184 residues: Elongation factor P (184 aa).

It belongs to the elongation factor P family.

Its subcellular location is the cytoplasm. It participates in protein biosynthesis; polypeptide chain elongation. Involved in peptide bond synthesis. Stimulates efficient translation and peptide-bond synthesis on native or reconstituted 70S ribosomes in vitro. Probably functions indirectly by altering the affinity of the ribosome for aminoacyl-tRNA, thus increasing their reactivity as acceptors for peptidyl transferase. The polypeptide is Elongation factor P (Thermus thermophilus (strain ATCC BAA-163 / DSM 7039 / HB27)).